Here is a 418-residue protein sequence, read N- to C-terminus: Gamma-glutamyl phosphate reductase (418 aa).

This sequence belongs to the gamma-glutamyl phosphate reductase family.

It localises to the cytoplasm. It catalyses the reaction L-glutamate 5-semialdehyde + phosphate + NADP(+) = L-glutamyl 5-phosphate + NADPH + H(+). It functions in the pathway amino-acid biosynthesis; L-proline biosynthesis; L-glutamate 5-semialdehyde from L-glutamate: step 2/2. In terms of biological role, catalyzes the NADPH-dependent reduction of L-glutamate 5-phosphate into L-glutamate 5-semialdehyde and phosphate. The product spontaneously undergoes cyclization to form 1-pyrroline-5-carboxylate. This chain is Gamma-glutamyl phosphate reductase, found in Parafrankia sp. (strain EAN1pec).